A 104-amino-acid polypeptide reads, in one-letter code: Replication restart protein PriB (104 aa).

The SSB domain maps to 1 to 101; that stretch reads MTNRLELSGI…LHAEQIELID (101 aa).

It belongs to the PriB family. Homodimer. Interacts with DnaT. Interacts with PriA. Component of the replication restart primosome. Primosome assembly occurs via a 'hand-off' mechanism. PriA binds to replication forks, subsequently PriB then DnaT bind; DnaT then displaces ssDNA to generate the helicase loading substrate.

Its function is as follows. Involved in the restart of stalled replication forks, which reloads the replicative helicase on sites far from the origin of replication; the PriA-PriB pathway is the major replication restart pathway. During primosome assembly it facilitates complex formation between PriA and DnaT on DNA; stabilizes PriA on DNA. Stimulates the DNA unwinding activity of PriA helicase. Binds single-stranded (ss)DNA at the primosome assembly site (PAS). One study finds it binds 15 nucleotide (nt) ssDNA. Another study finds the minimal ssDNA length for binding to PriB is 25 nt; prefers dT(30) over dA(30). Also binds 22 nt dsDNA. The polypeptide is Replication restart protein PriB (Klebsiella pneumoniae subsp. pneumoniae (strain ATCC 700721 / MGH 78578)).